The primary structure comprises 317 residues: Protein phosphatase 1 regulatory subunit 3C (317 aa).

Positions 84–87 (RVVF) match the PP1-binding motif motif. Positions 141 to 263 (PSSDYLSFRD…YRIVHVQWKP (123 aa)) are interaction with EPM2A. Residues 149–257 (RDRFQKNFVC…NNEAQNYRIV (109 aa)) enclose the CBM21 domain.

As to quaternary structure, interacts with PPP1CC catalytic subunit of PP1 and associates with glycogen. Forms complexes with glycogen phosphorylase, glycogen synthase and phosphorylase kinase which is necessary for its regulation of PP1 activity. Also interacts with EPM2A/laforin. Ubiquitinated by NHLRC1/malin in a EPM2A/laforin-dependent manner.

In terms of biological role, acts as a glycogen-targeting subunit for PP1 and regulates its activity. Activates glycogen synthase, reduces glycogen phosphorylase activity and limits glycogen breakdown. Dramatically increases basal and insulin-stimulated glycogen synthesis upon overexpression in a variety of cell types. The chain is Protein phosphatase 1 regulatory subunit 3C from Rattus norvegicus (Rat).